A 1502-amino-acid chain; its full sequence is MSNTPYNSSVPSIASMTQSSVSRSPNMHTATTPGANTSSNSPPLHMSSDSSKIKRKRNRIPLSCTICRKRKVKCDKLRPHCQQCTKTGVAHLCHYMEQTWAEEAEKELLKDNELKKLRERVKSLEKTLSKVHSSPSSNSLKSYNTPESSNLFMGSDEHTTLVNANTGSASSASHMHQQQQQQQQQEQQQDFSRSANANANSSSLSISNKYDNDELDLTKDFDLLHIKSNGTIHLGATHWLSIMKGDPYLKLLWGHIFAMREKLNEWYYQKNSYSKLKSSKCPINHAQAPPSAAAAATRKCPVDHSAFSSGMVAPKEETPLPRKCPVDHTMFSSGMIPPREDTSSQKRCPVDHTMYSAGMMPPKDETPSPFSTKAMIDHNKHTMNPPQSKCPVDHRNYMKDYPSDMANSSSNPASRCPIDHSSMKNTAALPASTHNTIPHHQPQSGSHARSHPAQSRKHDSYMTESEVLATLCEMLPPKRVIALFIEKFFKHLYPAIPILDEQNFKNHVNQMLSLSSMNPTVNNFGMSMPSSSTLENQPITQINLPKLSDSCNLGILIIILRLTWLSIPSNSCEVDLGEESGSFLVPNESSNMSASALTSMAKEESLLLKHETPVEALELCQKYLIKFDELSSISNNNVNLTTVQFAIFYNFYMKSASNDLTTLTNTNNTGMANPGHDSESHQILLSNITQMAFSCGLHRDPDNFPQLNATIPATSQDVSNNGSKKANPSTNPTLNNNMSAATTNSSSRSGSADSRSGSNPVNKKENQVSIERFKHTWRKIWYYIVSMDVNQSLSLGSPRLLRNLRDFSDTKLPSASRIDYVRDIKELIIVKNFTLFFQIDLCIIAVLNHILNVSLARSVRKFELDSLINLLKNLTYGTENVNDVVSSLINKGLLPTSEGGSVDSNNDEIYGLPKLPDILNHGQHNQNLYADGRNTSSSDIDKKLDLPHESTTRALFFSKHMTIRMLLYLLNYILFTHYEPMGSEDPGTNILAKEYAQEALNFAMDGYRNCMIFFNNIRNTNSLFDYMNVILSYPCLDIGHRSLQFIVCLILRAKCGPLTGMRESSIITNGTSSGFNSSVEDEDVKVKQESSDELKKDDFMKDVNLDSGDSLAEILMSRMLLFQKLTKQLSKKYNYAIRMNKSTGFFVSLLDTPSKKSDSKSGGSSFMLGNWKHPKVSNMSGFLAGDKDQLQKCPVYQDALGFVSPTGANEGSAPMQGMSLQGSTARMGGTQLPPIRSYKPITYTSSNLRRMNETGEAEAKRRRFNDGYIDNNSNNDIPRGISPKPSNGLSSVQPLLSSFSMNQLNGGTIPTVPSLTNITSQMGALPSLDRITTNQINLPDPSRDEAFDNSIKQMTPMTSAFMNANTTIPSSTLNGNMNMNGAGTANTDTSANGSALSTLTSPQGSDLASNSATQYKPDLEDFLMQNSNFNGLMINPSSLVEVVGGYNDPNNLGRNDAVDFLPVDNVEIDGVGIKINYHLLTSIYVTSILSYTVLEDDANDEK.

Residues Met-1–Ser-50 are compositionally biased toward polar residues. Residues Met-1–Lys-56 form a disordered region. Cys-64, Cys-67, Cys-74, Cys-81, Cys-84, and Cys-93 together coordinate Zn(2+). Residues Cys-64–Cys-93 constitute a DNA-binding region (zn(2)-C6 fungal-type). Residues Glu-105–Ser-134 adopt a coiled-coil conformation. A disordered region spans residues Lys-126–Asn-208. The segment covering Lys-130–Ser-142 has biased composition (low complexity). 2 stretches are compositionally biased toward polar residues: residues Tyr-143 to Phe-152 and Thr-160 to His-176. The span at Gln-177–Asn-208 shows a compositional bias: low complexity. The heme-responsive; required for HMC formation stretch occupies residues Lys-244 to Ser-444. HRM repeat units lie at residues Lys-280–His-285, Lys-299–His-304, Lys-323–His-328, Arg-347–His-352, Lys-389–His-394, and Arg-415–His-420. Composition is skewed to polar residues over residues Ser-432 to His-447 and Gln-706 to Leu-734. Disordered regions lie at residues Ser-432–His-458 and Gln-706–Gln-767. Over residues Asn-735–Asn-759 the composition is skewed to low complexity. An HRM 7 repeat occupies Lys-1192–Gln-1197. A disordered region spans residues Thr-1384–Ser-1411. Residues Asp-1388–Ser-1411 show a composition bias toward polar residues.

As to quaternary structure, binds DNA as a homodimer. Interacts with SRO9 and YDJ1. In the absence of heme, binds to at least four cellular proteins, including YDJ1 and SRO9, forming a high-molecular-weight complex (HMC) which results in repression of its activity and dictates its DNA-binding specificity.

Its subcellular location is the nucleus. Functionally, regulation of oxygen dependent gene expression. It modulates the expression of Iso-1 (CYP1) and Iso-2 (CYP3) cytochrome c. In response to heme, promotes transcription of genes encoding functions required for respiration, controlling oxidative damage and repression of anaerobic genes. Binds to the sequence 5'-CGGNNNTNNCGG-3'. Is non-functional in terms of iso-1 cytochrome c expression in strain S288c and its derivatives. This is Heme-responsive zinc finger transcription factor HAP1 (HAP1) from Saccharomyces cerevisiae (strain ATCC 204508 / S288c) (Baker's yeast).